Consider the following 468-residue polypeptide: Phosphatidylinositol-binding clathrin assembly protein LAP (468 aa).

Positions 16-158 (RHSLAGQGLA…LSYRAMAFDF (143 aa)) constitute an ENTH domain. The interval 438 to 468 (NAGDGTAKYDGGAGSSPFDWGATDDDGGAAQ) is disordered. Positions 459–468 (ATDDDGGAAQ) are enriched in acidic residues.

Belongs to the PICALM/SNAP91 family. As to quaternary structure, binds clathrin and phosphatidylinositol 4,5-bisphosphate. In embryos, expression is seen in central and peripheral nervous systems (brain and ventral nerve cord) and Garland cells. Coexpressed with clathrin at presynaptic boutons of neuromuscular junctions.

Its subcellular location is the membrane. The protein localises to the clathrin-coated pit. It is found in the golgi apparatus. It localises to the cytoplasmic vesicle. The protein resides in the clathrin-coated vesicle. Assembly protein recruiting clathrin and adaptor protein complex 2 (AP2) to cell membranes at sites of coated-pit formation and clathrin-vesicle assembly. May be required to determine the amount of membrane to be recycled, possibly by regulating the size of the clathrin cage. Involved in AP2-dependent clathrin-mediated endocytosis at the neuromuscular junction. This chain is Phosphatidylinositol-binding clathrin assembly protein LAP (lap), found in Drosophila melanogaster (Fruit fly).